A 1175-amino-acid polypeptide reads, in one-letter code: 1-phosphatidylinositol 4,5-bisphosphate phosphodiesterase beta-4 (1175 aa).

Alanine 2 carries the N-acetylalanine modification. The PI-PLC X-box domain occupies 313 to 463; it reads QEMDHPLAHY…LKRKILIKNK (151 aa). Residues histidine 328 and histidine 375 contribute to the active site. The tract at residues 482–511 is disordered; sequence EAGESASPANILEDDNEEEIESADQEEEAH. Over residues 493 to 508 the composition is skewed to acidic residues; sequence LEDDNEEEIESADQEE. The PI-PLC Y-box domain occupies 565–681; sequence LSTMINYAQP…GYLLKPDFMR (117 aa). One can recognise a C2 domain in the interval 684 to 809; that stretch reads DRTFDPFSET…SLRNEGNKPL (126 aa). Disordered regions lie at residues 863-895 and 1082-1110; these read ADVPSDTSKNDKKGKANTAKANVTPQSSSELRP and KISMENSKAISQDKSIKNKAERERRVREL. Polar residues-rich tracts occupy residues 881-895 and 1085-1094; these read AKANVTPQSSSELRP and MENSKAISQD. The residue at position 886 (threonine 886) is a Phosphothreonine. The span at 1095–1109 shows a compositional bias: basic and acidic residues; it reads KSIKNKAERERRVRE.

The cofactor is Ca(2+). In terms of tissue distribution, preferentially expressed in the retina.

It localises to the cell membrane. It catalyses the reaction a 1,2-diacyl-sn-glycero-3-phospho-(1D-myo-inositol-4,5-bisphosphate) + H2O = 1D-myo-inositol 1,4,5-trisphosphate + a 1,2-diacyl-sn-glycerol + H(+). The enzyme catalyses a 1,2-diacyl-sn-glycero-3-phospho-(1D-myo-inositol) + H2O = 1D-myo-inositol 1-phosphate + a 1,2-diacyl-sn-glycerol + H(+). Functionally, activated phosphatidylinositol-specific phospholipase C enzymes catalyze the production of the second messenger molecules diacylglycerol (DAG) and inositol 1,4,5-trisphosphate (IP3) involved in G-protein coupled receptor signaling pathways. PLCB4 is a direct effector of the endothelin receptor signaling pathway that plays an essential role in lower jaw and middle ear structures development. The sequence is that of 1-phosphatidylinositol 4,5-bisphosphate phosphodiesterase beta-4 from Homo sapiens (Human).